The sequence spans 241 residues: tRNA (guanine-N(7)-)-methyltransferase (241 aa).

Residues 1–10 (MTESNDTPIQ) show a composition bias toward polar residues. The interval 1-20 (MTESNDTPIQTEEGDERQHR) is disordered. Positions 71, 96, 123, and 146 each coordinate S-adenosyl-L-methionine. D146 is an active-site residue. Substrate contacts are provided by residues K150, D182, and 219-222 (TKFE).

This sequence belongs to the class I-like SAM-binding methyltransferase superfamily. TrmB family.

The enzyme catalyses guanosine(46) in tRNA + S-adenosyl-L-methionine = N(7)-methylguanosine(46) in tRNA + S-adenosyl-L-homocysteine. Its pathway is tRNA modification; N(7)-methylguanine-tRNA biosynthesis. Its function is as follows. Catalyzes the formation of N(7)-methylguanine at position 46 (m7G46) in tRNA. This is tRNA (guanine-N(7)-)-methyltransferase from Pseudomonas fluorescens (strain Pf0-1).